The primary structure comprises 97 residues: DNA-directed RNA polymerase subunit omega (97 aa).

This sequence belongs to the RNA polymerase subunit omega family. The RNAP catalytic core consists of 2 alpha, 1 beta, 1 beta' and 1 omega subunit. When a sigma factor is associated with the core the holoenzyme is formed, which can initiate transcription.

It catalyses the reaction RNA(n) + a ribonucleoside 5'-triphosphate = RNA(n+1) + diphosphate. In terms of biological role, promotes RNA polymerase assembly. Latches the N- and C-terminal regions of the beta' subunit thereby facilitating its interaction with the beta and alpha subunits. The sequence is that of DNA-directed RNA polymerase subunit omega from Coxiella burnetii (strain CbuK_Q154) (Coxiella burnetii (strain Q154)).